A 342-amino-acid polypeptide reads, in one-letter code: Ribosomal RNA small subunit methyltransferase C (342 aa).

Belongs to the methyltransferase superfamily. RsmC family. In terms of assembly, monomer.

The protein resides in the cytoplasm. The catalysed reaction is guanosine(1207) in 16S rRNA + S-adenosyl-L-methionine = N(2)-methylguanosine(1207) in 16S rRNA + S-adenosyl-L-homocysteine + H(+). Functionally, specifically methylates the guanine in position 1207 of 16S rRNA in the 30S particle. This is Ribosomal RNA small subunit methyltransferase C from Hahella chejuensis (strain KCTC 2396).